The following is a 327-amino-acid chain: Thioredoxin reductase sirT (327 aa).

Residues 15–18 (AGPA), 37–42 (DTGVFR), H50, and A115 each bind FAD. A disulfide bond links C139 and C142. Residues D289 and 296 to 297 (QV) contribute to the FAD site.

The protein belongs to the class-II pyridine nucleotide-disulfide oxidoreductase family. In terms of assembly, homodimer. FAD is required as a cofactor.

Its pathway is mycotoxin biosynthesis. Functionally, thioredoxin reductase; part of the gene cluster that mediates the biosynthesis of sirodesmin PL, an epipolythiodioxopiperazine (ETP) characterized by a disulfide bridged cyclic dipeptide and that acts as a phytotoxin which is involved in the blackleg didease of canola. SirD catalyzes the O-prenylation of L-tyrosine (L-Tyr) in the presence of dimethylallyl diphosphate (DMAPP) to yield 4-O-dimethylallyl-L-Tyr, and therefore represents probably the first pathway-specific enzyme in the biosynthesis of sirodesmin PL. 4-O-dimethylallyl-L-Tyr, then undergoes condensation with L-Ser in a reaction catalyzed by the non-ribosomal peptide synthase sirP to form the diketopiperazine (DKP) backbone. Further bishydroxylation of the DKP performed by the cytochrome P450 monooxygenase sirC leads to the production of the intermediate phomamide. This step is essential to form the reactive thiol group required for toxicity of sirodesmin PL. The next steps of sirodesmin biosynthesis are not well understood yet, but some predictions could be made from intermediate compounds identification. Phomamide is converted into phomalizarine via oxidation, probably by sirT. Further oxidation, methylation (by sirM or sirN) and reduction steps convert phomalizarine to deacetyl sirodesmin. Finally, acetyltransferase sirH probably acetylates deacetyl sirodesmin to produce sirodesmin PL. This Leptosphaeria maculans (Blackleg fungus) protein is Thioredoxin reductase sirT.